The sequence spans 139 residues: Nucleoside diphosphate kinase (139 aa).

Residues K12, F60, R88, T94, R105, and N115 each contribute to the ATP site. H118 acts as the Pros-phosphohistidine intermediate in catalysis.

This sequence belongs to the NDK family. In terms of assembly, homotetramer. Mg(2+) is required as a cofactor.

The protein localises to the cytoplasm. The enzyme catalyses a 2'-deoxyribonucleoside 5'-diphosphate + ATP = a 2'-deoxyribonucleoside 5'-triphosphate + ADP. The catalysed reaction is a ribonucleoside 5'-diphosphate + ATP = a ribonucleoside 5'-triphosphate + ADP. In terms of biological role, major role in the synthesis of nucleoside triphosphates other than ATP. The ATP gamma phosphate is transferred to the NDP beta phosphate via a ping-pong mechanism, using a phosphorylated active-site intermediate. The protein is Nucleoside diphosphate kinase of Caldanaerobacter subterraneus subsp. tengcongensis (strain DSM 15242 / JCM 11007 / NBRC 100824 / MB4) (Thermoanaerobacter tengcongensis).